Here is a 116-residue protein sequence, read N- to C-terminus: Small ribosomal subunit protein uS13m (116 aa).

The protein belongs to the universal ribosomal protein uS13 family. Part of the small ribosomal subunit.

Its subcellular location is the mitochondrion. Its function is as follows. Located at the top of the head of the small subunit, it contacts several helices of the 18S rRNA. In Daucus carota (Wild carrot), this protein is Small ribosomal subunit protein uS13m (RPS13).